Consider the following 353-residue polypeptide: MSTKDIFFNPIWDVRMTDTSLRDGSHHKRHQFTKDEVGAIVAALDTAGVPVIEVTHGDGLGGSSFNYGFSKTPEQELIKLAAETAKEAKIAFLMLPGVGTKEDIKEAQNNGGSICRIATHCTEADVSIQHFGLARELGLETVGFLMMSHTIPPEKLAQQARIMADAGCQCVYVVDSAGALVLEGVRDRVAALVAELGDDAQVGFHGHENLGLGVANSVEAVRAGAKQIDGSCRRFGAGAGNAPVEALIGVFDKIGVKTGIDFFDIADAAEEVVAPAMPAECLLDRNALIMGYSGVYSSFLKHAIRQSERYGVPAHQLLHRAGQRKLIGGQEDQLIDIALEIKREQDSGATAAH.

One can recognise a Pyruvate carboxyltransferase domain in the interval 14-266 (VRMTDTSLRD…KTGIDFFDIA (253 aa)). Residue 22–23 (RD) participates in substrate binding. Position 23 (aspartate 23) interacts with Mn(2+). The active-site Proton acceptor is histidine 26. Substrate-binding residues include serine 176 and histidine 205. Mn(2+) is bound by residues histidine 205 and histidine 207. Substrate is bound at residue tyrosine 296.

It belongs to the 4-hydroxy-2-oxovalerate aldolase family.

The catalysed reaction is (S)-4-hydroxy-2-oxopentanoate = acetaldehyde + pyruvate. The chain is 4-hydroxy-2-oxovalerate aldolase 1 from Mycobacterium sp. (strain KMS).